We begin with the raw amino-acid sequence, 152 residues long: Deoxyuridine 5'-triphosphate nucleotidohydrolase (152 aa).

Residues 71 to 73 (RSG), Asn-84, 88 to 90 (LID), and Met-98 contribute to the substrate site.

The protein belongs to the dUTPase family. Mg(2+) is required as a cofactor.

The catalysed reaction is dUTP + H2O = dUMP + diphosphate + H(+). The protein operates within pyrimidine metabolism; dUMP biosynthesis; dUMP from dCTP (dUTP route): step 2/2. Functionally, this enzyme is involved in nucleotide metabolism: it produces dUMP, the immediate precursor of thymidine nucleotides and it decreases the intracellular concentration of dUTP so that uracil cannot be incorporated into DNA. The protein is Deoxyuridine 5'-triphosphate nucleotidohydrolase of Hahella chejuensis (strain KCTC 2396).